A 379-amino-acid chain; its full sequence is Chaperone protein DnaJ (379 aa).

Positions 4 to 69 (DLYETLGVKK…QKRAAYDRYG (66 aa)) constitute a J domain. A CR-type zinc finger spans residues 137-215 (GKTAQIRVPT…CHGQGRVTEE (79 aa)). Zn(2+) contacts are provided by Cys-150, Cys-153, Cys-167, Cys-170, Cys-189, Cys-192, Cys-203, and Cys-206. CXXCXGXG motif repeat units follow at residues 150–157 (CDVCTGSG), 167–174 (CATCQGSG), 189–196 (CPTCGGRG), and 203–210 (CTKCHGQG).

This sequence belongs to the DnaJ family. As to quaternary structure, homodimer. Requires Zn(2+) as cofactor.

It localises to the cytoplasm. Functionally, participates actively in the response to hyperosmotic and heat shock by preventing the aggregation of stress-denatured proteins and by disaggregating proteins, also in an autonomous, DnaK-independent fashion. Unfolded proteins bind initially to DnaJ; upon interaction with the DnaJ-bound protein, DnaK hydrolyzes its bound ATP, resulting in the formation of a stable complex. GrpE releases ADP from DnaK; ATP binding to DnaK triggers the release of the substrate protein, thus completing the reaction cycle. Several rounds of ATP-dependent interactions between DnaJ, DnaK and GrpE are required for fully efficient folding. Also involved, together with DnaK and GrpE, in the DNA replication of plasmids through activation of initiation proteins. This is Chaperone protein DnaJ from Sinorhizobium fredii (strain NBRC 101917 / NGR234).